The chain runs to 392 residues: Streptogrisin-D (392 aa).

The N-terminal stretch at 1–64 is a signal peptide; it reads MCVSRRRNSG…AGFTFQTANA (64 aa). A propeptide spanning residues 65-204 is cleaved from the precursor; that stretch reads SDDVPAFGAK…NRTAGEFTPL (140 aa). A disulfide bond links cysteine 218 and cysteine 238. Active-site charge relay system residues include histidine 237, aspartate 266, and serine 348. Residues cysteine 342 and cysteine 369 are joined by a disulfide bond.

Belongs to the peptidase S1 family. As to quaternary structure, homodimer.

Its function is as follows. Has a primary specificity for large aliphatic or aromatic amino acids. In Streptomyces griseus, this protein is Streptogrisin-D (sprD).